The following is a 366-amino-acid chain: Apolipoprotein A-V (366 aa).

Positions 1 to 23 (MASMAAVLTWALALLSAFSATQA) are cleaved as a signal peptide. Coiled-coil stretches lie at residues 54–157 (ATLK…VGED) and 236–262 (TLKA…RAFA). Position 55 is a phosphothreonine; by FAM20C (threonine 55). Serine 59 is modified (phosphoserine).

It belongs to the apolipoprotein A1/A4/E family. Interacts with GPIHBP1. Interacts with SORL1; this interaction leads to APOA5 internalization and sorting either to lysosomes and degradation, or to the trans-Golgi network. Post-translationally, phosphorylated by FAM20C in the extracellular medium. As to expression, liver and plasma.

The protein localises to the secreted. Its subcellular location is the early endosome. It localises to the late endosome. It is found in the golgi apparatus. The protein resides in the trans-Golgi network. Functionally, minor apolipoprotein mainly associated with HDL and to a lesser extent with VLDL. May also be associated with chylomicrons. Important determinant of plasma triglyceride (TG) levels by both being a potent stimulator of apo-CII lipoprotein lipase (LPL) TG hydrolysis and an inhibitor of the hepatic VLDL-TG production rate (without affecting the VLDL-apoB production rate). Activates poorly lecithin:cholesterol acyltransferase (LCAT) and does not enhance efflux of cholesterol from macrophages. Binds heparin. The chain is Apolipoprotein A-V (APOA5) from Homo sapiens (Human).